We begin with the raw amino-acid sequence, 145 residues long: Small ribosomal subunit protein eS19 (145 aa).

It belongs to the eukaryotic ribosomal protein eS19 family. In terms of assembly, part of the 30S ribosomal subunit.

Its function is as follows. May be involved in maturation of the 30S ribosomal subunit. This chain is Small ribosomal subunit protein eS19, found in Methanothermobacter thermautotrophicus (strain ATCC 29096 / DSM 1053 / JCM 10044 / NBRC 100330 / Delta H) (Methanobacterium thermoautotrophicum).